The following is a 256-amino-acid chain: Imidazole glycerol phosphate synthase subunit HisF (256 aa).

Catalysis depends on residues Asp-11 and Asp-130.

It belongs to the HisA/HisF family. As to quaternary structure, heterodimer of HisH and HisF.

Its subcellular location is the cytoplasm. The catalysed reaction is 5-[(5-phospho-1-deoxy-D-ribulos-1-ylimino)methylamino]-1-(5-phospho-beta-D-ribosyl)imidazole-4-carboxamide + L-glutamine = D-erythro-1-(imidazol-4-yl)glycerol 3-phosphate + 5-amino-1-(5-phospho-beta-D-ribosyl)imidazole-4-carboxamide + L-glutamate + H(+). Its pathway is amino-acid biosynthesis; L-histidine biosynthesis; L-histidine from 5-phospho-alpha-D-ribose 1-diphosphate: step 5/9. In terms of biological role, IGPS catalyzes the conversion of PRFAR and glutamine to IGP, AICAR and glutamate. The HisF subunit catalyzes the cyclization activity that produces IGP and AICAR from PRFAR using the ammonia provided by the HisH subunit. The protein is Imidazole glycerol phosphate synthase subunit HisF of Synechococcus sp. (strain CC9605).